The primary structure comprises 69 residues: UPF0435 protein SH1076 (69 aa).

This sequence belongs to the UPF0435 family.

This chain is UPF0435 protein SH1076, found in Staphylococcus haemolyticus (strain JCSC1435).